The sequence spans 377 residues: NADH dehydrogenase [ubiquinone] 1 alpha subcomplex subunit 9, mitochondrial (377 aa).

The N-terminal 35 residues, methionine 1–glutamine 35, are a transit peptide targeting the mitochondrion. Lysine 175 is modified (N6-succinyllysine). N6-acetyllysine is present on residues lysine 189 and lysine 370.

It belongs to the complex I NDUFA9 subunit family. As to quaternary structure, complex I is composed of 45 different subunits. This a component of the hydrophobic protein fraction. Interacts with BLOC1S1. Interacts with SLC2A4. Interacts with CLOCK. Interacts with RAB5IF. It depends on FAD as a cofactor. Acetylated on lysine residues. BLOC1S1 is required for acetylation. Acetylated by CLOCK in a circadian manner. As to expression, expressed by the principal cells of the epididymis. Detected in flagella of epididymal sperm (at protein level).

The protein localises to the mitochondrion matrix. Its function is as follows. Accessory subunit of the mitochondrial membrane respiratory chain NADH dehydrogenase (Complex I), that is believed not to be involved in catalysis. Complex I functions in the transfer of electrons from NADH to the respiratory chain. The immediate electron acceptor for the enzyme is believed to be ubiquinone. In Rattus norvegicus (Rat), this protein is NADH dehydrogenase [ubiquinone] 1 alpha subcomplex subunit 9, mitochondrial.